Consider the following 417-residue polypeptide: UPF0754 membrane protein PCC8801_0398 (417 aa).

The next 2 membrane-spanning stretches (helical) occupy residues 11 to 31 (FSLLWTIALPPIAGTIIGYFT) and 395 to 415 (IVNIGGVLGFLVGVFQSILLI).

It belongs to the UPF0754 family.

Its subcellular location is the cell inner membrane. The polypeptide is UPF0754 membrane protein PCC8801_0398 (Rippkaea orientalis (strain PCC 8801 / RF-1) (Cyanothece sp. (strain PCC 8801))).